The primary structure comprises 68 residues: MAEMKTADIRAMSPDQKDDAVAELKKERFNLRFQRATGQLENTSRLREARRDIARIKTIAAQQRDAKK.

It belongs to the universal ribosomal protein uL29 family.

This Rhodopseudomonas palustris (strain BisB18) protein is Large ribosomal subunit protein uL29.